Reading from the N-terminus, the 245-residue chain is Zinc import ATP-binding protein ZnuC (245 aa).

Positions 27–244 constitute an ABC transporter domain; the sequence is LTADSLTLFY…AKFLSVFPNN (218 aa). An ATP-binding site is contributed by 59-66; that stretch reads GPNGGGKT.

It belongs to the ABC transporter superfamily. Zinc importer (TC 3.A.1.15.5) family. In terms of assembly, the complex is composed of two ATP-binding proteins (ZnuC), two transmembrane proteins (ZnuB) and a solute-binding protein (ZnuA).

The protein resides in the cell inner membrane. It catalyses the reaction Zn(2+)(out) + ATP(in) + H2O(in) = Zn(2+)(in) + ADP(in) + phosphate(in) + H(+)(in). In terms of biological role, part of the ABC transporter complex ZnuABC involved in zinc import. Responsible for energy coupling to the transport system. The polypeptide is Zinc import ATP-binding protein ZnuC (Anaplasma marginale (strain St. Maries)).